Consider the following 246-residue polypeptide: Pyridoxine 5'-phosphate synthase (246 aa).

2 residues coordinate 3-amino-2-oxopropyl phosphate: asparagine 8 and arginine 19. Catalysis depends on histidine 44, which acts as the Proton acceptor. 2 residues coordinate 1-deoxy-D-xylulose 5-phosphate: arginine 46 and histidine 51. Residue glutamate 76 is the Proton acceptor of the active site. Threonine 106 provides a ligand contact to 1-deoxy-D-xylulose 5-phosphate. Histidine 198 functions as the Proton donor in the catalytic mechanism. 3-amino-2-oxopropyl phosphate-binding positions include aspartate 199 and 221–222; that span reads GH.

Belongs to the PNP synthase family. Homooctamer; tetramer of dimers.

The protein localises to the cytoplasm. The catalysed reaction is 3-amino-2-oxopropyl phosphate + 1-deoxy-D-xylulose 5-phosphate = pyridoxine 5'-phosphate + phosphate + 2 H2O + H(+). It participates in cofactor biosynthesis; pyridoxine 5'-phosphate biosynthesis; pyridoxine 5'-phosphate from D-erythrose 4-phosphate: step 5/5. Its function is as follows. Catalyzes the complicated ring closure reaction between the two acyclic compounds 1-deoxy-D-xylulose-5-phosphate (DXP) and 3-amino-2-oxopropyl phosphate (1-amino-acetone-3-phosphate or AAP) to form pyridoxine 5'-phosphate (PNP) and inorganic phosphate. This Mesorhizobium japonicum (strain LMG 29417 / CECT 9101 / MAFF 303099) (Mesorhizobium loti (strain MAFF 303099)) protein is Pyridoxine 5'-phosphate synthase.